The chain runs to 147 residues: Allograft inflammatory factor 1 (147 aa).

Ser-2 bears the N-acetylserine mark. Position 11 is an N6-acetyllysine (Lys-11). Ser-39 carries the phosphoserine modification. The region spanning 45–80 (SKLEAFKTKYMEFDLNGNGDIDIMSLKRMLEKLGVP) is the EF-hand 1 domain. 7 residues coordinate Ca(2+): Asp-58, Asn-60, Asn-62, Asp-64, Glu-98, Thr-100, and Asp-105. The region spanning 81 to 115 (KTHLELKKLIREVSSGSEETFSYSDFLRMMLGKRS) is the EF-hand 2; degenerate domain. Residues 127-147 (KNKEHQKPTGPPAKKAISELP) form a disordered region.

As to quaternary structure, homodimer (Potential). Monomer. Interacts with LCP1. As to expression, cardiac allograft, spleen and testis. Expressed by inflammatory cells (macrophages and neutrophils).

It localises to the cytoplasm. The protein localises to the cytoskeleton. Its subcellular location is the cell projection. It is found in the ruffle membrane. The protein resides in the phagocytic cup. Its function is as follows. Actin-binding protein that enhances membrane ruffling and RAC activation. Enhances the actin-bundling activity of LCP1. Binds calcium. Plays a role in RAC signaling and in phagocytosis. May play an role in macrophage activation and function. Promotes the proliferation of vascular smooth muscle cells and of T-lymphocytes. Enhances lymphocyte migration. Plays a role in vascular inflammation. The protein is Allograft inflammatory factor 1 (Aif1) of Rattus norvegicus (Rat).